The primary structure comprises 204 residues: MYNVECIPIKDIKPGLKNINVIFIVLEVGVATVTKENREVRNFKVGDPTACINVSIWDEPGKLIAPGDIVRLTKGYASIWRHCLTLYSGKNGEVFKIGEYCMVFNESVNMSEPKRAEQQAVANPAATPAGLPAGGGAPGLPAKGGATGIPQPAVAAAPGAPATQSAVTTAPAAAPAIAPQTTTKPGTRGGRGGGGRGGLKGERR.

A DNA-binding region (OB) is located at residues Ile-24–Val-94. A disordered region spans residues Arg-115–Arg-204. Composition is skewed to low complexity over residues Ala-122–Leu-131 and Gly-139–Thr-183. A compositionally biased stretch (gly residues) spans Thr-187–Gly-198.

The protein belongs to the SOSS-B family.

In Drosophila melanogaster (Fruit fly), this protein is SOSS complex subunit B homolog.